A 78-amino-acid chain; its full sequence is Acyl carrier protein (78 aa).

The region spanning 2–77 (SNIEDRVRKI…AAIDYVNSAS (76 aa)) is the Carrier domain. Ser37 carries the O-(pantetheine 4'-phosphoryl)serine modification.

The protein belongs to the acyl carrier protein (ACP) family. Post-translationally, 4'-phosphopantetheine is transferred from CoA to a specific serine of apo-ACP by AcpS. This modification is essential for activity because fatty acids are bound in thioester linkage to the sulfhydryl of the prosthetic group.

The protein localises to the cytoplasm. The protein operates within lipid metabolism; fatty acid biosynthesis. Its function is as follows. Carrier of the growing fatty acid chain in fatty acid biosynthesis. In Photobacterium profundum (strain SS9), this protein is Acyl carrier protein.